Consider the following 33-residue polypeptide: Beta-amanitin proprotein (33 aa).

Residues 1-10 (MSDINATRLP) constitute a propeptide that is removed on maturation. The segment at residues 11 to 18 (IWGIGCDP) is a cross-link (cyclopeptide (Ile-Pro)). A cross-link (2'-cysteinyl-6'-hydroxytryptophan sulfoxide (Trp-Cys)) is located at residues 12 to 16 (WGIGC). Positions 19–33 (CVGDEVTALLTRGEA) are excised as a propeptide.

The protein belongs to the MSDIN fungal toxin family. Post-translationally, processed by the macrocyclase-peptidase enzyme POPB to yield a toxic cyclic decapeptide. POPB first removes 10 residues from the N-terminus. Conformational trapping of the remaining peptide forces the enzyme to release this intermediate rather than proceed to macrocyclization. The enzyme rebinds the remaining peptide in a different conformation and catalyzes macrocyclization of the N-terminal 8 residues.

Toxin belonging to the bicyclic octapeptides amatoxins that acts by binding non-competitively to RNA polymerase II and greatly slowing the elongation of transcripts from target promoters. The protein is Beta-amanitin proprotein of Amanita fuligineoides.